Reading from the N-terminus, the 784-residue chain is Serine/threonine-protein kinase DCLK2 (784 aa).

A disordered region spans residues 1–45; the sequence is MASTRSIELEHFEERDKRPRPGSRRGAPSSSGGSSSSGPKGNGLI. Positions 7 to 19 are enriched in basic and acidic residues; it reads IELEHFEERDKRP. Residues 24–39 are compositionally biased toward low complexity; that stretch reads RRGAPSSSGGSSSSGP. Position 61 is a phosphothreonine (Thr61). 2 Doublecortin domains span residues 72 to 158 and 197 to 280; these read KKAR…VDYT and KLVT…AQDD. Low complexity-rich tracts occupy residues 300–312 and 341–364; these read AVKY…PGPS and TPSS…SPGS. The interval 300 to 368 is disordered; the sequence is AVKYSGSKSP…PTSPGSFRGL (69 aa). Ser379 carries the phosphoserine modification. Residues 411–668 enclose the Protein kinase domain; sequence YKIGKVIGDG…AGEILSHPWV (258 aa). ATP-binding positions include 417-425 and Lys440; that span reads IGDGNFAVV. The Proton acceptor role is filled by Asp532. Ser664 carries the post-translational modification Phosphoserine. Residue Thr683 is modified to Phosphothreonine. Residues 724–784 are disordered; the sequence is CQDSSRPGME…RAGTWRRHRD (61 aa). The span at 741–758 shows a compositional bias: low complexity; the sequence is SASAEEPPVSAPAAAPAP.

This sequence belongs to the protein kinase superfamily. CAMK Ser/Thr protein kinase family. CaMK subfamily. In terms of assembly, binds to and stabilizes microtubules. Interacts with MAPK8IP1/JIP-1, MAPK8IP2/JIP-2, MAPK9/JNK2, PPP1R9B/NEURABIN-2 and actin. Autophosphorylated.

Its subcellular location is the cytoplasm. It localises to the cytoskeleton. It carries out the reaction L-seryl-[protein] + ATP = O-phospho-L-seryl-[protein] + ADP + H(+). It catalyses the reaction L-threonyl-[protein] + ATP = O-phospho-L-threonyl-[protein] + ADP + H(+). Functionally, protein kinase with a significantly reduced Ca(2+)/CAM affinity and dependence compared to other members of the CaMK family. May play a role in the down-regulation of CRE-dependent gene activation probably by phosphorylation of the CREB coactivator CRTC2/TORC2 and the resulting retention of TORC2 in the cytoplasm. This is Serine/threonine-protein kinase DCLK2 (DCLK2) from Ailuropoda melanoleuca (Giant panda).